We begin with the raw amino-acid sequence, 441 residues long: Amino-acid acetyltransferase (441 aa).

An N-acetyltransferase domain is found at 295-434 (EQVRRATIND…QALYNYQRRS (140 aa)).

The protein belongs to the acetyltransferase family. ArgA subfamily. Homohexamer.

The protein localises to the cytoplasm. The catalysed reaction is L-glutamate + acetyl-CoA = N-acetyl-L-glutamate + CoA + H(+). The protein operates within amino-acid biosynthesis; L-arginine biosynthesis; N(2)-acetyl-L-ornithine from L-glutamate: step 1/4. This Pectobacterium atrosepticum (strain SCRI 1043 / ATCC BAA-672) (Erwinia carotovora subsp. atroseptica) protein is Amino-acid acetyltransferase.